Here is a 139-residue protein sequence, read N- to C-terminus: S-protein homolog 14 (139 aa).

Positions 1 to 20 (MNRFIIFMFVVVTYFGLNVA) are cleaved as a signal peptide. A glycan (N-linked (GlcNAc...) asparagine) is linked at N136.

This sequence belongs to the plant self-incompatibility (S1) protein family.

The protein resides in the secreted. In Arabidopsis thaliana (Mouse-ear cress), this protein is S-protein homolog 14.